The following is a 126-amino-acid chain: Aspartate 1-decarboxylase (126 aa).

The active-site Schiff-base intermediate with substrate; via pyruvic acid is the Ser-25. Ser-25 is modified (pyruvic acid (Ser)). Residue Thr-57 coordinates substrate. Residue Tyr-58 is the Proton donor of the active site. Residue 73–75 (GAA) participates in substrate binding.

This sequence belongs to the PanD family. In terms of assembly, heterooctamer of four alpha and four beta subunits. It depends on pyruvate as a cofactor. Post-translationally, is synthesized initially as an inactive proenzyme, which is activated by self-cleavage at a specific serine bond to produce a beta-subunit with a hydroxyl group at its C-terminus and an alpha-subunit with a pyruvoyl group at its N-terminus.

The protein resides in the cytoplasm. The enzyme catalyses L-aspartate + H(+) = beta-alanine + CO2. It participates in cofactor biosynthesis; (R)-pantothenate biosynthesis; beta-alanine from L-aspartate: step 1/1. Its function is as follows. Catalyzes the pyruvoyl-dependent decarboxylation of aspartate to produce beta-alanine. The polypeptide is Aspartate 1-decarboxylase (Psychrobacter arcticus (strain DSM 17307 / VKM B-2377 / 273-4)).